Here is a 1085-residue protein sequence, read N- to C-terminus: Voltage-dependent calcium channel subunit alpha-2/delta-3 (1085 aa).

A signal peptide spans 1–33; the sequence is MAGPGSLCCASRGASALLATALLYAALGDVVRS. The Extracellular segment spans residues 34 to 1062; that stretch reads EQQIPLSVVK…HPEENARECG (1029 aa). Asparagine 166 is a glycosylation site (N-linked (GlcNAc...) asparagine). In terms of domain architecture, VWFA spans 256–438; sequence DVVILVDVSG…ENVMEYLHVL (183 aa). 3 residues coordinate a divalent metal cation: aspartate 262, serine 264, and serine 266. Residues 262–266 carry the MIDAS-like motif motif; sequence DVSGS. Asparagine 309 is a glycosylation site (N-linked (GlcNAc...) asparagine). A disulfide bond links cysteine 412 and cysteine 1049. A Cache domain is found at 452 to 543; the sequence is WTEAYIDSTL…RPLYEEGKKR (92 aa). N-linked (GlcNAc...) asparagine glycans are attached at residues asparagine 547 and asparagine 626. Tyrosine 918 is subject to Phosphotyrosine. Residues 1063 to 1083 form a helical membrane-spanning segment; that stretch reads GASSLQAQVALLLLPLVSSLF. The Cytoplasmic portion of the chain corresponds to 1084-1085; sequence SR.

Belongs to the calcium channel subunit alpha-2/delta family. As to quaternary structure, dimer formed of alpha-2-2 and delta-2 chains; disulfide-linked. Voltage-dependent calcium channels are multisubunit complexes, consisting of alpha-1 (CACNA1), alpha-2 (CACNA2D), beta (CACNB) and delta (CACNA2D) subunits in a 1:1:1:1 ratio. In terms of processing, N-glycosylated. Post-translationally, may be proteolytically processed into subunits alpha-2-3 and delta-3 that are disulfide-linked. It is however unclear whether such cleavage really takes place in vivo and has a functional role. In terms of tissue distribution, in heart, it is expressed in atrium but not in ventricle.

The protein localises to the membrane. In terms of biological role, the alpha-2/delta subunit of voltage-dependent calcium channels regulates calcium current density and activation/inactivation kinetics of the calcium channel. Acts as a regulatory subunit for P/Q-type calcium channel (CACNA1A), N-type (CACNA1B), L-type (CACNA1C OR CACNA1D) but not T-type (CACNA1G). The protein is Voltage-dependent calcium channel subunit alpha-2/delta-3 (Cacna2d3) of Rattus norvegicus (Rat).